The sequence spans 505 residues: MTEQTPTPQLPADENSLIAERRAKLGALRGQGIAYPNDFVRTHFAGDLQAEFAEAETWTAEALEAADRSVKLAGRLMAKRVMGKASFAQIQDESGRVQLFLQGNVLGDAYTAFKGWDVGDIVAVEGGLTRTKTGELSVKATALRLLTKSLRPLPDKWHGLSDVEQRYRQRYVDLIVTPEAREVFIKRSKIIRAIRAWLDARRFLEVETPMMHYIPGGATAKPFTTHHNALDLDLYLRVAPELYLKRLVVGGLERVYEINRNFRNEGVSTRHNPEFTMLELYEAYATYHEIMDLTEQVIRDTAQGVLGTTQVSWDGADIDLAPAFRRWRMDEAVRHHNPEISAADCTDRAALLRHCERLKIKVKPSYGWGKLLLEIFESTVEHTLVQPTFITDHPVEVSPLARASDTEPGYTDRFELFINGKELANGFSELNDPEDQAARFQAQVQAKDGGDDEAMHYDADYIRALEYGMAPTGGLGIGIDRLVMLLTGSTSIRDVLLFPYMRPEA.

Residues E415 and E422 each contribute to the Mg(2+) site.

This sequence belongs to the class-II aminoacyl-tRNA synthetase family. As to quaternary structure, homodimer. The cofactor is Mg(2+).

The protein resides in the cytoplasm. It carries out the reaction tRNA(Lys) + L-lysine + ATP = L-lysyl-tRNA(Lys) + AMP + diphosphate. The sequence is that of Lysine--tRNA ligase from Xanthomonas campestris pv. campestris (strain 8004).